A 622-amino-acid chain; its full sequence is Low affinity potassium transport system protein Kup (622 aa).

12 helical membrane passes run 9 to 29, 46 to 66, 101 to 121, 137 to 157, 165 to 185, 213 to 233, 247 to 267, 276 to 296, 337 to 357, 363 to 383, 395 to 415, and 416 to 436; these read LSAV…TSPL, PDVV…VVSV, ILVV…VITP, PALD…LFVI, VGKL…LLGL, VSFF…ALYA, WFTV…ALLL, PFFL…ATLA, IYIP…IIGF, LAAA…ILFC, FLVA…FSAN, and VLKL…MFII.

This sequence belongs to the HAK/KUP transporter (TC 2.A.72) family.

Its subcellular location is the cell inner membrane. The enzyme catalyses K(+)(in) + H(+)(in) = K(+)(out) + H(+)(out). In terms of biological role, responsible for the low-affinity transport of potassium into the cell. Likely operates as a K(+):H(+) symporter. This Yersinia pseudotuberculosis serotype O:1b (strain IP 31758) protein is Low affinity potassium transport system protein Kup.